A 271-amino-acid chain; its full sequence is ATP synthase subunit a (271 aa).

Helical transmembrane passes span 38–58, 100–120, 146–166, 220–240, and 242–262; these read FWTLNIDSMFFSVVLGLLFLA, LIAPLALTVFVWVFLMNLMDL, DVNITLSMALGVFILILFYSI, LIFILIAGLLPWWSQWILNVP, and AIFHILIITLQAFIFMVLTIV.

This sequence belongs to the ATPase A chain family. In terms of assembly, F-type ATPases have 2 components, CF(1) - the catalytic core - and CF(0) - the membrane proton channel. CF(1) has five subunits: alpha(3), beta(3), gamma(1), delta(1), epsilon(1). CF(0) has three main subunits: a(1), b(2) and c(9-12). The alpha and beta chains form an alternating ring which encloses part of the gamma chain. CF(1) is attached to CF(0) by a central stalk formed by the gamma and epsilon chains, while a peripheral stalk is formed by the delta and b chains.

The protein localises to the cell inner membrane. In terms of biological role, key component of the proton channel; it plays a direct role in the translocation of protons across the membrane. This chain is ATP synthase subunit a, found in Enterobacter sp. (strain 638).